A 73-amino-acid polypeptide reads, in one-letter code: Large ribosomal subunit protein bL31 (73 aa).

This sequence belongs to the bacterial ribosomal protein bL31 family. Type A subfamily. In terms of assembly, part of the 50S ribosomal subunit.

Functionally, binds the 23S rRNA. The chain is Large ribosomal subunit protein bL31 from Bartonella bacilliformis (strain ATCC 35685 / KC583 / Herrer 020/F12,63).